The primary structure comprises 252 residues: Ubiquinone biosynthesis O-methyltransferase (252 aa).

S-adenosyl-L-methionine is bound by residues Arg-45, Gly-76, Asp-97, and Met-141.

This sequence belongs to the methyltransferase superfamily. UbiG/COQ3 family.

It catalyses the reaction a 3-demethylubiquinol + S-adenosyl-L-methionine = a ubiquinol + S-adenosyl-L-homocysteine + H(+). The enzyme catalyses a 3-(all-trans-polyprenyl)benzene-1,2-diol + S-adenosyl-L-methionine = a 2-methoxy-6-(all-trans-polyprenyl)phenol + S-adenosyl-L-homocysteine + H(+). The protein operates within cofactor biosynthesis; ubiquinone biosynthesis. Functionally, O-methyltransferase that catalyzes the 2 O-methylation steps in the ubiquinone biosynthetic pathway. The protein is Ubiquinone biosynthesis O-methyltransferase of Caulobacter sp. (strain K31).